Here is a 284-residue protein sequence, read N- to C-terminus: 2,3,4,5-tetrahydropyridine-2,6-dicarboxylate N-succinyltransferase (284 aa).

The substrate site is built by Arg111 and Asp148.

This sequence belongs to the transferase hexapeptide repeat family. Homotrimer.

It is found in the cytoplasm. The catalysed reaction is (S)-2,3,4,5-tetrahydrodipicolinate + succinyl-CoA + H2O = (S)-2-succinylamino-6-oxoheptanedioate + CoA. It participates in amino-acid biosynthesis; L-lysine biosynthesis via DAP pathway; LL-2,6-diaminopimelate from (S)-tetrahydrodipicolinate (succinylase route): step 1/3. The polypeptide is 2,3,4,5-tetrahydropyridine-2,6-dicarboxylate N-succinyltransferase (Ehrlichia ruminantium (strain Gardel)).